The following is a 185-amino-acid chain: Large ribosomal subunit protein uL5 (185 aa).

It belongs to the universal ribosomal protein uL5 family. Part of the 50S ribosomal subunit; part of the 5S rRNA/L5/L18/L25 subcomplex. Contacts the 5S rRNA and the P site tRNA. Forms a bridge to the 30S subunit in the 70S ribosome.

In terms of biological role, this is one of the proteins that bind and probably mediate the attachment of the 5S RNA into the large ribosomal subunit, where it forms part of the central protuberance. In the 70S ribosome it contacts protein S13 of the 30S subunit (bridge B1b), connecting the 2 subunits; this bridge is implicated in subunit movement. Contacts the P site tRNA; the 5S rRNA and some of its associated proteins might help stabilize positioning of ribosome-bound tRNAs. This is Large ribosomal subunit protein uL5 from Brucella abortus (strain 2308).